The primary structure comprises 294 residues: UDP-3-O-acyl-N-acetylglucosamine deacetylase (294 aa).

His-75, His-232, and Asp-236 together coordinate Zn(2+). His-259 (proton donor) is an active-site residue.

This sequence belongs to the LpxC family. Zn(2+) serves as cofactor.

It carries out the reaction a UDP-3-O-[(3R)-3-hydroxyacyl]-N-acetyl-alpha-D-glucosamine + H2O = a UDP-3-O-[(3R)-3-hydroxyacyl]-alpha-D-glucosamine + acetate. It functions in the pathway glycolipid biosynthesis; lipid IV(A) biosynthesis; lipid IV(A) from (3R)-3-hydroxytetradecanoyl-[acyl-carrier-protein] and UDP-N-acetyl-alpha-D-glucosamine: step 2/6. In terms of biological role, catalyzes the hydrolysis of UDP-3-O-myristoyl-N-acetylglucosamine to form UDP-3-O-myristoylglucosamine and acetate, the committed step in lipid A biosynthesis. This is UDP-3-O-acyl-N-acetylglucosamine deacetylase from Sulfurimonas denitrificans (strain ATCC 33889 / DSM 1251) (Thiomicrospira denitrificans (strain ATCC 33889 / DSM 1251)).